The chain runs to 453 residues: Vacuolar cation/proton exchanger 1b (453 aa).

The Cytoplasmic segment spans residues 1-67; it reads MPVSRMMMES…LRSLLANLND (67 aa). A helical membrane pass occupies residues 68–85; that stretch reads VLLTTRLFLLFPAVLLAI. At 86 to 91 the chain is on the extracellular side; that stretch reads AATYLH. A helical membrane pass occupies residues 92 to 109; sequence FGQVWVFVLSLIGLVPLA. The Cytoplasmic segment spans residues 110-126; sequence ERLSFLTEQIAFYTGPT. The helical transmembrane segment at 127–147 threads the bilayer; it reads VGGLLNATFGNVTEVIIALLA. Residues 136–171 are cation selection; it reads GNVTEVIIALLALREGKIEVVKCSLLGSILSNLLLV. At 148-160 the chain is on the extracellular side; that stretch reads LREGKIEVVKCSL. The chain crosses the membrane as a helical span at residues 161–181; that stretch reads LGSILSNLLLVLGTSLFLAGI. The Cytoplasmic segment spans residues 182-194; the sequence is ANLRAHQPYDTKQ. Residues 195–215 traverse the membrane as a helical segment; the sequence is AHVNTALLMLAVLCHSLPLML. At 216 to 232 the chain is on the extracellular side; it reads RYAVTSGDHAIVSGDAA. The helical transmembrane segment at 233–253 threads the bilayer; it reads LHLSRACSILMLIAYLAYLFF. Topologically, residues 254 to 283 are cytoplasmic; it reads QLNTHRQLFEPQQVEDDDDDDLVIAQDDEP. The chain crosses the membrane as a helical span at residues 284-304; it reads VLGFSSAMIWLALMTLLTALL. Topologically, residues 305-327 are extracellular; it reads SGYVVSTIEAASESWELSVSFIS. A helical membrane pass occupies residues 328–348; sequence IILLPIVGNAAEHAGAVIFAL. The interval 335–370 is cation selection; sequence GNAAEHAGAVIFALKNKMDITLGVSLGSATQISMFV. The Cytoplasmic portion of the chain corresponds to 349–364; that stretch reads KNKMDITLGVSLGSAT. Residues 365–385 traverse the membrane as a helical segment; that stretch reads QISMFVVPVSVIVAWTMGIPM. The Extracellular segment spans residues 386–388; sequence DLD. A helical membrane pass occupies residues 389–409; the sequence is FNLLETGSLFLAILVTAFTLQ. Over 410–414 the chain is Cytoplasmic; that stretch reads EGESH. The chain crosses the membrane as a helical span at residues 415-435; it reads YLKGLILVLCYAVISVCFFVI. Over 436-453 the chain is Extracellular; that stretch reads RRRSAGGTDGVHHLDVIV.

This sequence belongs to the Ca(2+):cation antiporter (CaCA) (TC 2.A.19) family. Cation/proton exchanger (CAX) subfamily. In terms of tissue distribution, expressed in embryo and roots.

It is found in the vacuole membrane. Its function is as follows. Vacuolar cation/proton exchanger (CAX). Translocates Ca(2+) and other metal ions into vacuoles using the proton gradient formed by H(+)-ATPase and H(+)-pyrophosphatase. In Oryza sativa subsp. japonica (Rice), this protein is Vacuolar cation/proton exchanger 1b (CAX1b).